The primary structure comprises 484 residues: MKFIIKLFPEIMIKSESVRKRFVKILTGNIRNVLNKYDDTVAVVKHWDYIEVRSKNIENRTLLVELLGRIPGIHHFLEVEEKPFVTLHDIFEQTLSDVATQIENKTFCVRVKRKGKHDFSSLDAERYIGGGLNQAVASAKVQLSKPDVTVRIDIENDKMMLIKARHQGIGGYPIGTQEDVLSLISGGFDSGVSSYMLIRRGSRVHYCFFNLGGATHEIGVKQMAYHIWKRFSGSHKVRFVAINFEQVVAEILEKVDNGQMGVVLKRMMVRAASKVAQRFGIQAIVTGEALGQVSSQTLTNLRLIDEVAESLVLRPLITHDKEQIIAKAKEIGTEDIAKSMPEFCGAISKSPTVKAVKEKIEQEESYFDFSVLESAVQNAQYLDIRQIAEQTKKEVSEVDEITVLSANEVILDIRSPEEVDDKPLEISGQNIILMPFYKLSSHFAELDQSKNYVLYCERGVMSKLQALYLREKGFDNVKVLNKIS.

One can recognise a THUMP domain in the interval 61–165 (TLLVELLGRI…NDKMMLIKAR (105 aa)). ATP-binding positions include 183–184 (LI), lysine 265, glycine 287, and glutamine 296. Cysteines 344 and 456 form a disulfide. Positions 404-484 (LSANEVILDI…DNVKVLNKIS (81 aa)) constitute a Rhodanese domain. Cysteine 456 serves as the catalytic Cysteine persulfide intermediate.

This sequence belongs to the ThiI family.

The protein resides in the cytoplasm. It catalyses the reaction [ThiI sulfur-carrier protein]-S-sulfanyl-L-cysteine + a uridine in tRNA + 2 reduced [2Fe-2S]-[ferredoxin] + ATP + H(+) = [ThiI sulfur-carrier protein]-L-cysteine + a 4-thiouridine in tRNA + 2 oxidized [2Fe-2S]-[ferredoxin] + AMP + diphosphate. The catalysed reaction is [ThiS sulfur-carrier protein]-C-terminal Gly-Gly-AMP + S-sulfanyl-L-cysteinyl-[cysteine desulfurase] + AH2 = [ThiS sulfur-carrier protein]-C-terminal-Gly-aminoethanethioate + L-cysteinyl-[cysteine desulfurase] + A + AMP + 2 H(+). It participates in cofactor biosynthesis; thiamine diphosphate biosynthesis. Functionally, catalyzes the ATP-dependent transfer of a sulfur to tRNA to produce 4-thiouridine in position 8 of tRNAs, which functions as a near-UV photosensor. Also catalyzes the transfer of sulfur to the sulfur carrier protein ThiS, forming ThiS-thiocarboxylate. This is a step in the synthesis of thiazole, in the thiamine biosynthesis pathway. The sulfur is donated as persulfide by IscS. The polypeptide is tRNA sulfurtransferase (Histophilus somni (strain 2336) (Haemophilus somnus)).